The sequence spans 312 residues: Pantothenate kinase (312 aa).

97 to 104 (GSVAVGKS) provides a ligand contact to ATP.

This sequence belongs to the prokaryotic pantothenate kinase family.

Its subcellular location is the cytoplasm. It carries out the reaction (R)-pantothenate + ATP = (R)-4'-phosphopantothenate + ADP + H(+). Its pathway is cofactor biosynthesis; coenzyme A biosynthesis; CoA from (R)-pantothenate: step 1/5. In Mycolicibacterium paratuberculosis (strain ATCC BAA-968 / K-10) (Mycobacterium paratuberculosis), this protein is Pantothenate kinase.